A 151-amino-acid chain; its full sequence is Homeobox protein HD-1 (151 aa).

Positions 87–146 form a DNA-binding region, homeobox; it reads ESIKSRRFPKFITEALERSFEIDQYPSEAEKARLAKICKLSTKQINNWFTNKRNRTKGHE.

The protein localises to the nucleus. The protein is Homeobox protein HD-1 (HD-1) of Encephalitozoon cuniculi (strain GB-M1) (Microsporidian parasite).